The primary structure comprises 69 residues: uncharacterized protein (69 aa).

Residues 1 to 18 form the signal peptide; sequence MAMLWISMFIIMRKYGRS. The disordered stretch occupies residues 17-69; it reads RSSSSSSSSSSSSSSSSSSSSSSSSSSSSSSSSSSSSSSSSGSSSNSNRVVVV. The segment covering 18-61 has biased composition (low complexity); that stretch reads SSSSSSSSSSSSSSSSSSSSSSSSSSSSSSSSSSSSSSSSGSSS.

Its subcellular location is the secreted. This is an uncharacterized protein from Dictyostelium discoideum (Social amoeba).